The sequence spans 834 residues: Protein Jade-1 (834 aa).

Residues 1-46 are disordered; that stretch reads MKRGRLPSSSEDSDDNGSLSTTWSQHSRSQHGRSSTCSRPEDRKPS. Residues 24 to 35 are compositionally biased toward low complexity; that stretch reads SQHSRSQHGRSS. The interval 61-81 is interaction with KAT7/HBO1 and histones; that stretch reads DSYQLNPDDYYVLADPWRQEW. Residues 81-189 form an interaction with histones region; it reads WEKGVQVPVS…EQRCYDNMNH (109 aa). The residue at position 90 (Ser90) is a Phosphoserine. A Phosphothreonine modification is found at Thr93. Residue Lys115 forms a Glycyl lysine isopeptide (Lys-Gly) (interchain with G-Cter in SUMO2) linkage. A PHD-type 1 zinc finger spans residues 204–254; sequence DVVCDVCQSPDGEDGNEMVFCDKCNICVHQACYGILKVPEGSWLCRTCALG. A C2HC pre-PHD-type zinc finger spans residues 256-290; it reads QPKCLLCPKKGGAMKPTRSGTKWVHVSCALWIPEV. Residues 314–370 form a PHD-type 2 zinc finger; it reads LVCSLCNEKFGASIQCSVKNCRTAFHVTCAFDRGLEMKTILAENDEVKFKSYCPKHS. Residues 367–409 form a disordered region; the sequence is PKHSSHRKPEEGLGEGAAQENGAPESSPQSPLEPYGSLEPNRE. Residue Lys573 forms a Glycyl lysine isopeptide (Lys-Gly) (interchain with G-Cter in SUMO2) linkage. 2 disordered regions span residues 589–621 and 676–716; these read HPLK…CGRR and DKSF…GTRK. Ser603 is subject to Phosphoserine. An N6-acetyllysine modification is found at Lys609. A phosphoserine mark is found at Ser704 and Ser735. The interval 738–819 is disordered; that stretch reads KSWGGFRIPK…EKKCIHASST (82 aa). 2 stretches are compositionally biased toward basic and acidic residues: residues 747–768 and 777–790; these read KKGE…HSDC and PAKE…RADS.

It belongs to the JADE family. Component of the HBO1 complex composed at least of ING4 or ING5, KAT7/HBO1, MEAF6, and one of JADE1, JADE2 and JADE3. Interacts with NPHP4. Highly expressed in kidney. Also present in liver (at protein level).

The protein localises to the nucleus. It localises to the chromosome. Its subcellular location is the cytoplasm. It is found in the cytoskeleton. The protein resides in the cilium basal body. Functionally, scaffold subunit of some HBO1 complexes, which have a histone H4 acetyltransferase activity. Plays a key role in HBO1 complex by directing KAT7/HBO1 specificity towards histone H4 acetylation (H4K5ac, H4K8ac and H4K12ac), regulating DNA replication initiation, regulating DNA replication initiation. May also promote acetylation of nucleosomal histone H4 by KAT5. Promotes apoptosis. May act as a renal tumor suppressor. Negatively regulates canonical Wnt signaling; at least in part, cooperates with NPHP4 in this function. This chain is Protein Jade-1 (Jade1), found in Mus musculus (Mouse).